Consider the following 212-residue polypeptide: Probable GTP-binding protein EngB (212 aa).

The EngB-type G domain maps to 38-210 (SLPEIAFVGK…KASLAKCIKF (173 aa)). Residues 46–53 (GKSNVGKS), 73–77 (GRTRQ), 91–94 (DLPG), 158–161 (TKSD), and 189–191 (VSN) each bind GTP. Ser-53 and Thr-75 together coordinate Mg(2+).

This sequence belongs to the TRAFAC class TrmE-Era-EngA-EngB-Septin-like GTPase superfamily. EngB GTPase family. Mg(2+) serves as cofactor.

In terms of biological role, necessary for normal cell division and for the maintenance of normal septation. This is Probable GTP-binding protein EngB from Rickettsia rickettsii (strain Sheila Smith).